Here is a 131-residue protein sequence, read N- to C-terminus: Ribosome-binding factor A (131 aa).

Belongs to the RbfA family. In terms of assembly, monomer. Binds 30S ribosomal subunits, but not 50S ribosomal subunits or 70S ribosomes.

It localises to the cytoplasm. One of several proteins that assist in the late maturation steps of the functional core of the 30S ribosomal subunit. Associates with free 30S ribosomal subunits (but not with 30S subunits that are part of 70S ribosomes or polysomes). Required for efficient processing of 16S rRNA. May interact with the 5'-terminal helix region of 16S rRNA. In Ruegeria sp. (strain TM1040) (Silicibacter sp.), this protein is Ribosome-binding factor A.